The sequence spans 517 residues: Bifunctional purine biosynthesis protein PurH (517 aa).

Positions 1–145 constitute an MGS-like domain; the sequence is MSPLALVSVS…KNHKDVSVLV (145 aa).

It belongs to the PurH family.

The catalysed reaction is (6R)-10-formyltetrahydrofolate + 5-amino-1-(5-phospho-beta-D-ribosyl)imidazole-4-carboxamide = 5-formamido-1-(5-phospho-D-ribosyl)imidazole-4-carboxamide + (6S)-5,6,7,8-tetrahydrofolate. It catalyses the reaction IMP + H2O = 5-formamido-1-(5-phospho-D-ribosyl)imidazole-4-carboxamide. Its pathway is purine metabolism; IMP biosynthesis via de novo pathway; 5-formamido-1-(5-phospho-D-ribosyl)imidazole-4-carboxamide from 5-amino-1-(5-phospho-D-ribosyl)imidazole-4-carboxamide (10-formyl THF route): step 1/1. It functions in the pathway purine metabolism; IMP biosynthesis via de novo pathway; IMP from 5-formamido-1-(5-phospho-D-ribosyl)imidazole-4-carboxamide: step 1/1. The chain is Bifunctional purine biosynthesis protein PurH from Prochlorococcus marinus (strain MIT 9312).